An 84-amino-acid chain; its full sequence is MIAVITTLLTYYMSSNNLITLLIAIEILLLTVTLKLIHISGYYDDIYGTIFSLIIIILAGAESAIGLSILVAYYRLRGTIGHSI.

A run of 2 helical transmembrane segments spans residues 19 to 39 and 50 to 70; these read ITLLIAIEILLLTVTLKLIHI and IFSLIIIILAGAESAIGLSIL.

This sequence belongs to the complex I subunit 4L family.

The protein localises to the mitochondrion membrane. It catalyses the reaction a ubiquinone + NADH + 5 H(+)(in) = a ubiquinol + NAD(+) + 4 H(+)(out). Core subunit of the mitochondrial membrane respiratory chain NADH dehydrogenase (Complex I) that is believed to belong to the minimal assembly required for catalysis. Complex I functions in the transfer of electrons from NADH to the respiratory chain. The immediate electron acceptor for the enzyme is believed to be ubiquinone. The chain is NADH-ubiquinone oxidoreductase chain 4L (NAD4L) from Candida albicans (strain SC5314 / ATCC MYA-2876) (Yeast).